A 188-amino-acid chain; its full sequence is Peptidyl-tRNA hydrolase (188 aa).

Tyr15 contributes to the tRNA binding site. His20 serves as the catalytic Proton acceptor. TRNA contacts are provided by Phe66, Asn68, and Asn114.

This sequence belongs to the PTH family. In terms of assembly, monomer.

Its subcellular location is the cytoplasm. The enzyme catalyses an N-acyl-L-alpha-aminoacyl-tRNA + H2O = an N-acyl-L-amino acid + a tRNA + H(+). In terms of biological role, hydrolyzes ribosome-free peptidyl-tRNAs (with 1 or more amino acids incorporated), which drop off the ribosome during protein synthesis, or as a result of ribosome stalling. Its function is as follows. Catalyzes the release of premature peptidyl moieties from peptidyl-tRNA molecules trapped in stalled 50S ribosomal subunits, and thus maintains levels of free tRNAs and 50S ribosomes. In Lactococcus lactis subsp. lactis (strain IL1403) (Streptococcus lactis), this protein is Peptidyl-tRNA hydrolase.